Here is a 426-residue protein sequence, read N- to C-terminus: Serine--tRNA ligase (426 aa).

Position 233–235 (233–235 (TAE)) interacts with L-serine. 264 to 266 (RSE) lines the ATP pocket. Residue Glu-287 participates in L-serine binding. Residue 351–354 (EISS) coordinates ATP. Ser-387 contributes to the L-serine binding site.

Belongs to the class-II aminoacyl-tRNA synthetase family. Type-1 seryl-tRNA synthetase subfamily. Homodimer. The tRNA molecule binds across the dimer.

It is found in the cytoplasm. It carries out the reaction tRNA(Ser) + L-serine + ATP = L-seryl-tRNA(Ser) + AMP + diphosphate + H(+). The enzyme catalyses tRNA(Sec) + L-serine + ATP = L-seryl-tRNA(Sec) + AMP + diphosphate + H(+). It functions in the pathway aminoacyl-tRNA biosynthesis; selenocysteinyl-tRNA(Sec) biosynthesis; L-seryl-tRNA(Sec) from L-serine and tRNA(Sec): step 1/1. In terms of biological role, catalyzes the attachment of serine to tRNA(Ser). Is also able to aminoacylate tRNA(Sec) with serine, to form the misacylated tRNA L-seryl-tRNA(Sec), which will be further converted into selenocysteinyl-tRNA(Sec). This is Serine--tRNA ligase from Pseudomonas syringae pv. tomato (strain ATCC BAA-871 / DC3000).